We begin with the raw amino-acid sequence, 1187 residues long: Metabotropic glutamate receptor-like protein Q (1187 aa).

Over 1–735 (MRLFFKFFYL…TIETSNIAKT (735 aa)) the chain is Extracellular. 14 N-linked (GlcNAc...) asparagine glycosylation sites follow: asparagine 35, asparagine 44, asparagine 55, asparagine 177, asparagine 258, asparagine 275, asparagine 397, asparagine 402, asparagine 462, asparagine 526, asparagine 527, asparagine 557, asparagine 562, and asparagine 684. A helical transmembrane segment spans residues 736–756 (VMIITTSILVLLILLCFGITI). Over 757-768 (AYSKEKVINFGN) the chain is Cytoplasmic. Residues 769–789 (IVFLILMLFSCLFLCIIIYVS) traverse the membrane as a helical segment. Residues 790–796 (IEPTNFS) lie on the Extracellular side of the membrane. Asparagine 794 carries N-linked (GlcNAc...) asparagine glycosylation. A helical transmembrane segment spans residues 797–817 (CQFSAIVFPIGIGILFTLTLL). Over 818 to 843 (KQYKIYKLFKYSDFLKINTDNLKMVK) the chain is Cytoplasmic. Residues 844–864 (YAGLIMVPVFLLVLIGVIVYP) form a helical membrane-spanning segment. Residues 865–888 (SKPTFILDLHTKTATKYCISRKYY) are Extracellular-facing. Residues 889–909 (VFSIVIVVYEVIILLTSCFIA) form a helical membrane-spanning segment. The Cytoplasmic portion of the chain corresponds to 910–925 (MKSKRYHSTPGTFYES). Residues 926–946 (LFNSILIYNYTLVFIVLIPLF) traverse the membrane as a helical segment. Topologically, residues 947 to 955 (YTLQNNPTT) are extracellular. A helical transmembrane segment spans residues 956–976 (IYLIYSIGSSILVFATLSIIF). Residues 977–1095 (IPKINFLFRR…SPSSQSIDFL (119 aa)) lie on the Cytoplasmic side of the membrane. Residues 1074 to 1105 (IYPNQIPKQTTNSPSSQSIDFLNNPTIPKNKS) show a composition bias toward polar residues. Positions 1074–1187 (IYPNQIPKQT…RKSMDPSLDS (114 aa)) are disordered. Residues 1114–1124 (KKPKKKLKSKI) are compositionally biased toward basic residues. Low complexity predominate over residues 1125-1174 (ISKSANSSPNINNNTINNNNNNNNNNNNNNNNNNNNNNINNNNNNNININ).

It belongs to the G-protein coupled receptor 3 family. GABA-B receptor subfamily.

Its subcellular location is the membrane. The sequence is that of Metabotropic glutamate receptor-like protein Q (grlQ) from Dictyostelium discoideum (Social amoeba).